Reading from the N-terminus, the 461-residue chain is Protein YIG1 (461 aa).

The segment at 58-80 is disordered; that stretch reads SNVGEDGGDVGNYSEEDDDGDEE. The segment covering 71-80 has biased composition (acidic residues); it reads SEEDDDGDEE.

It localises to the cytoplasm. The protein resides in the nucleus. Its function is as follows. Involved in the regulation of anaerobiotic glycerol metabolism. This chain is Protein YIG1 (YIG1), found in Saccharomyces cerevisiae (strain ATCC 204508 / S288c) (Baker's yeast).